Reading from the N-terminus, the 265-residue chain is Tryptophan synthase alpha chain (265 aa).

Catalysis depends on proton acceptor residues E47 and D58.

It belongs to the TrpA family. As to quaternary structure, tetramer of two alpha and two beta chains.

It carries out the reaction (1S,2R)-1-C-(indol-3-yl)glycerol 3-phosphate + L-serine = D-glyceraldehyde 3-phosphate + L-tryptophan + H2O. The protein operates within amino-acid biosynthesis; L-tryptophan biosynthesis; L-tryptophan from chorismate: step 5/5. In terms of biological role, the alpha subunit is responsible for the aldol cleavage of indoleglycerol phosphate to indole and glyceraldehyde 3-phosphate. The protein is Tryptophan synthase alpha chain of Methanoregula boonei (strain DSM 21154 / JCM 14090 / 6A8).